The chain runs to 346 residues: Heat-inducible transcription repressor HrcA (346 aa).

This sequence belongs to the HrcA family.

In terms of biological role, negative regulator of class I heat shock genes (grpE-dnaK-dnaJ and groELS operons). Prevents heat-shock induction of these operons. This chain is Heat-inducible transcription repressor HrcA, found in Kineococcus radiotolerans (strain ATCC BAA-149 / DSM 14245 / SRS30216).